Here is an 845-residue protein sequence, read N- to C-terminus: Translation initiation factor IF-2 (845 aa).

2 disordered regions span residues 44–91 (KRRK…NLSS) and 119–256 (ARRA…NQEP). Residues 119 to 129 (ARRAKEREESL) are compositionally biased toward basic and acidic residues. Residues 139 to 148 (DETPQEEEEP) are compositionally biased toward acidic residues. The segment covering 156–165 (SLSPAQSQIE) has biased composition (polar residues). Basic and acidic residues-rich tracts occupy residues 179–194 (IEKR…DRNS) and 202–217 (SEVR…DEKR). Positions 343–510 (LRPPVVTIMG…AILLQAEILD (168 aa)) constitute a tr-type G domain. Residues 352-359 (GHVDHGKT) are G1. 352–359 (GHVDHGKT) provides a ligand contact to GTP. The G2 stretch occupies residues 377-381 (GITQH). Residues 398–401 (DTPG) form a G3 region. GTP is bound by residues 398–402 (DTPGH) and 452–455 (NKID). The interval 452–455 (NKID) is G4. A G5 region spans residues 488–490 (SAK).

The protein belongs to the TRAFAC class translation factor GTPase superfamily. Classic translation factor GTPase family. IF-2 subfamily.

The protein resides in the cytoplasm. One of the essential components for the initiation of protein synthesis. Protects formylmethionyl-tRNA from spontaneous hydrolysis and promotes its binding to the 30S ribosomal subunits. Also involved in the hydrolysis of GTP during the formation of the 70S ribosomal complex. This is Translation initiation factor IF-2 from Bartonella henselae (strain ATCC 49882 / DSM 28221 / CCUG 30454 / Houston 1) (Rochalimaea henselae).